Reading from the N-terminus, the 1052-residue chain is Carbamoyl phosphate synthase large chain (1052 aa).

A carboxyphosphate synthetic domain region spans residues 1 to 399 (MRENVKRVLV…ALQKAVRMLD (399 aa)). Residues arginine 127, arginine 167, glycine 173, glycine 174, lysine 206, leucine 208, glutamate 213, glycine 239, valine 240, histidine 241, glutamine 282, and glutamate 296 each contribute to the ATP site. Positions 131 to 325 (RETMINVNLP…LAYVSAKLAL (195 aa)) constitute an ATP-grasp 1 domain. 3 residues coordinate Mg(2+): glutamine 282, glutamate 296, and asparagine 298. 3 residues coordinate Mn(2+): glutamine 282, glutamate 296, and asparagine 298. Residues 400 to 548 (LGEPGIIGGK…VTYNGTEDDI (149 aa)) form an oligomerization domain region. The segment at 549-930 (EFSNGIRKLL…LKSWLSSSPN (382 aa)) is carbamoyl phosphate synthetic domain. Residues 674-864 (SRLLDKLGIK…IIDLALTGVI (191 aa)) enclose the ATP-grasp 2 domain. Positions 710, 749, 751, 756, 780, 781, 782, 783, 823, and 835 each coordinate ATP. Positions 823, 835, and 837 each coordinate Mg(2+). Mn(2+) contacts are provided by glutamine 823, glutamate 835, and asparagine 837. The MGS-like domain maps to 930 to 1052 (NRLPDQKGIA…YEIGEYGAGI (123 aa)). Positions 931-1052 (RLPDQKGIAL…YEIGEYGAGI (122 aa)) are allosteric domain.

Belongs to the CarB family. In terms of assembly, composed of two chains; the small (or glutamine) chain promotes the hydrolysis of glutamine to ammonia, which is used by the large (or ammonia) chain to synthesize carbamoyl phosphate. Tetramer of heterodimers (alpha,beta)4. The cofactor is Mg(2+). It depends on Mn(2+) as a cofactor.

It catalyses the reaction hydrogencarbonate + L-glutamine + 2 ATP + H2O = carbamoyl phosphate + L-glutamate + 2 ADP + phosphate + 2 H(+). The catalysed reaction is hydrogencarbonate + NH4(+) + 2 ATP = carbamoyl phosphate + 2 ADP + phosphate + 2 H(+). It participates in amino-acid biosynthesis; L-arginine biosynthesis; carbamoyl phosphate from bicarbonate: step 1/1. Its pathway is pyrimidine metabolism; UMP biosynthesis via de novo pathway; (S)-dihydroorotate from bicarbonate: step 1/3. Functionally, large subunit of the glutamine-dependent carbamoyl phosphate synthetase (CPSase). CPSase catalyzes the formation of carbamoyl phosphate from the ammonia moiety of glutamine, carbonate, and phosphate donated by ATP, constituting the first step of 2 biosynthetic pathways, one leading to arginine and/or urea and the other to pyrimidine nucleotides. The large subunit (synthetase) binds the substrates ammonia (free or transferred from glutamine from the small subunit), hydrogencarbonate and ATP and carries out an ATP-coupled ligase reaction, activating hydrogencarbonate by forming carboxy phosphate which reacts with ammonia to form carbamoyl phosphate. The sequence is that of Carbamoyl phosphate synthase large chain from Sulfolobus acidocaldarius (strain ATCC 33909 / DSM 639 / JCM 8929 / NBRC 15157 / NCIMB 11770).